A 292-amino-acid chain; its full sequence is Thyroxine 5-deiodinase (292 aa).

At 1-30 (VVGEGRGALGGAATMLRSLLLHSLRLCAQT) the chain is on the cytoplasmic side. A helical; Signal-anchor for type II membrane protein membrane pass occupies residues 31–50 (ASCLVLFPRFLGTAFMLWLL). Residues 51–292 (DFLCIRKHLL…QLHGPQPRRV (242 aa)) are Extracellular-facing. Sec-158 is a catalytic residue. Residue Sec-158 is a non-standard amino acid, selenocysteine.

Belongs to the iodothyronine deiodinase family. As to quaternary structure, monomer. Homodimer. May undergo minor heretodimerization with DIO1 and DIO2.

It is found in the cell membrane. The protein localises to the endosome membrane. It catalyses the reaction 3,3',5'-triiodo-L-thyronine + iodide + A + H(+) = L-thyroxine + AH2. The catalysed reaction is 3,3'-diiodo-L-thyronine + iodide + A + H(+) = 3,3',5-triiodo-L-thyronine + AH2. It carries out the reaction 3-iodo-L-thyronine + iodide + A + H(+) = 3,5-diiodo-L-thyronine + AH2. The enzyme catalyses L-thyronine + iodide + A + H(+) = 3-iodo-L-thyronine + AH2. It catalyses the reaction 3',5'-diiodo-L-thyronine + iodide + A + H(+) = 3,3',5'-triiodo-L-thyronine + AH2. The catalysed reaction is 3'-iodo-L-thyronine + iodide + A + H(+) = 3,3'-diiodo-L-thyronine + AH2. It carries out the reaction 3,3',5'-triiodothyronamine + iodide + A + H(+) = 3,3',5,5'-tetraiodothyronamine + AH2. The enzyme catalyses 3',5'-diiodothyronamine + iodide + A + H(+) = 3,3',5'-triiodothyronamine + AH2. It catalyses the reaction 3,3'-diiodothyronamine + iodide + A + H(+) = 3,3',5-triiodothyronamine + AH2. The catalysed reaction is 3-iodothyronamine + iodide + A + H(+) = 3,5-diiodothyronamine + AH2. It carries out the reaction 3'-iodothyronamine + iodide + A + H(+) = 3,3'-diiodothyronamine + AH2. The enzyme catalyses thyronamine + iodide + A + H(+) = 3-iodothyronamine + AH2. Its function is as follows. Plays a crucial role in the metabolism of thyroid hormones (TH) and has specific roles in TH activation and inactivation by deiodination.Catalyzes the deiodination of L-thyroxine (T4) to 3,3',5'-triiodothyronine (rT3), 3,5,3'-triiodothyronine (T3) to 3,3'-diiodothyronine (3,3'-T2), 3,5-diiodothyronine (3,5-T2) to 3-monoiodothyronine (3-T1), rT3 to 3',5'-diiodothyronine (3',5'-T2) and 3,3'-T2 to 3'-monoiodothyronine (3'-T1) via inner-ring deiodination (IRD). Catalyzes the deiodination of 3-T1 to L-thyronine (T0) via outer-ring deiodination (ORD). Catalyzes the tyrosyl ring deiodinations of 3,3',5,5'-tetraiodothyronamine, 3,3',5'-triiodothyronamine, 3,5,3'-triiodothyronamine, 3,5-diiodothyronamine, 3,3'-diiodothyronamine and 3-iodothyronamine. The protein is Thyroxine 5-deiodinase (DIO3) of Ovis aries (Sheep).